Reading from the N-terminus, the 409-residue chain is Inner membrane transport protein YqeG (409 aa).

Over 1 to 25 the chain is Periplasmic; it reads MSNIWSKEETLWSFALYGTAVGAGT. The helical transmembrane segment at 26-46 threads the bilayer; it reads LFLPIQLGSAGAVVLFITALV. The Cytoplasmic portion of the chain corresponds to 47–87; the sequence is AWPLTYWPHKALCQFILSSKTSAGEGITGAVTHYYGKKIGN. The chain crosses the membrane as a helical span at residues 88–108; sequence LITTLYFIAFFVVVLIYAVAI. Topologically, residues 109–127 are periplasmic; it reads TNSLTEQLAKHMVIDLRIR. Residues 128-148 form a helical membrane-spanning segment; the sequence is MLVSLGVVLILNLIFLMGRHA. The Cytoplasmic portion of the chain corresponds to 149-151; the sequence is TIR. The chain crosses the membrane as a helical span at residues 152–172; it reads VMGFLVFPLIAYFLFLSIYLV. The Periplasmic segment spans residues 173–193; sequence GSWQPDLLTTQVEFNQNTLHQ. The chain crosses the membrane as a helical span at residues 194-214; sequence IWISIPVMVFAFSHTPIISTF. Topologically, residues 215-235 are cytoplasmic; the sequence is AIDRREKYGEHAMDKCKKIMK. Residues 236–256 form a helical membrane-spanning segment; the sequence is VAYLIICISVLFFVFSCLLSI. Topologically, residues 257 to 276 are periplasmic; sequence PPSYIEAAKEEGVTILSALS. Residues 277–297 form a helical membrane-spanning segment; sequence MLPNAPAWLSISGIIVAVVAM. Residues 298-329 are Cytoplasmic-facing; sequence SKSFLGTYFGVIEGATEVVKTTLQQVGVKKSR. Residues 330 to 350 form a helical membrane-spanning segment; the sequence is AFNRALSIMLVSLITFIVCCI. The Periplasmic portion of the chain corresponds to 351 to 353; the sequence is NPN. A helical membrane pass occupies residues 354-374; sequence AISMIYAISGPLIAMILFIMP. The Cytoplasmic segment spans residues 375–388; the sequence is TLSTYLIPALKPWR. The chain crosses the membrane as a helical span at residues 389-409; that stretch reads SIGNLITLIVGILCVSVMFFS.

Belongs to the amino acid/polyamine transporter 2 family. SdaC/TdcC subfamily.

The protein resides in the cell inner membrane. This Escherichia coli O6:H1 (strain CFT073 / ATCC 700928 / UPEC) protein is Inner membrane transport protein YqeG (yqeG).